A 230-amino-acid chain; its full sequence is Ribosomal RNA small subunit methyltransferase G (230 aa).

Residues Gly-74, Phe-79, 124-125, and Arg-141 each bind S-adenosyl-L-methionine; that span reads AE.

The protein belongs to the methyltransferase superfamily. RNA methyltransferase RsmG family.

The protein resides in the cytoplasm. In terms of biological role, specifically methylates the N7 position of a guanine in 16S rRNA. The polypeptide is Ribosomal RNA small subunit methyltransferase G (Acholeplasma laidlawii (strain PG-8A)).